Consider the following 844-residue polypeptide: SWI/SNF-related matrix-associated actin-dependent regulator of chromatin subfamily A containing DEAD/H box 1 homolog (844 aa).

Positions 1–23 (MSDSTVAASASASASSSAKSSLS) are enriched in low complexity. 2 disordered regions span residues 1-75 (MSDS…TKLE) and 121-180 (NCKP…STKM). Over residues 30–42 (INKNASSVVASPS) the composition is skewed to polar residues. The 171-residue stretch at 301-471 (TVMHKQEMNG…ISLLCFVMPK (171 aa)) folds into the Helicase ATP-binding domain. 314–321 (DEMGLGKT) contacts ATP. Positions 422-425 (DEAH) match the DEGH box motif. A Helicase C-terminal domain is found at 656–818 (YLDTLLPKLK…EQRCVVKLLT (163 aa)). Serine 834, serine 838, and serine 841 each carry phosphoserine.

This sequence belongs to the SNF2/RAD54 helicase family.

It localises to the nucleus. The catalysed reaction is ATP + H2O = ADP + phosphate + H(+). Functionally, DNA helicase that possesses intrinsic ATP-dependent nucleosome-remodeling activity and is both required for DNA repair and heterochromatin organization. Promotes DNA end resection of double-strand breaks (DSBs) following DNA damage: probably acts by weakening histone DNA interactions in nucleosomes flanking DSBs. The sequence is that of SWI/SNF-related matrix-associated actin-dependent regulator of chromatin subfamily A containing DEAD/H box 1 homolog (Etl1) from Drosophila melanogaster (Fruit fly).